Here is a 328-residue protein sequence, read N- to C-terminus: Malate dehydrogenase (328 aa).

12–18 serves as a coordination point for NAD(+); the sequence is GAAGQIA. Substrate is bound by residues Arg93 and Arg99. NAD(+)-binding positions include Asn106, Gln113, and 130–132; that span reads VGN. Positions 132 and 163 each coordinate substrate. His188 (proton acceptor) is an active-site residue.

Belongs to the LDH/MDH superfamily. MDH type 2 family.

It catalyses the reaction (S)-malate + NAD(+) = oxaloacetate + NADH + H(+). In terms of biological role, catalyzes the reversible oxidation of malate to oxaloacetate. The polypeptide is Malate dehydrogenase (Burkholderia ambifaria (strain ATCC BAA-244 / DSM 16087 / CCUG 44356 / LMG 19182 / AMMD) (Burkholderia cepacia (strain AMMD))).